A 313-amino-acid polypeptide reads, in one-letter code: Ribosomal RNA small subunit methyltransferase H (313 aa).

S-adenosyl-L-methionine is bound by residues G35 to H37, D55, F80, D102, and Q109.

It belongs to the methyltransferase superfamily. RsmH family.

It localises to the cytoplasm. The catalysed reaction is cytidine(1402) in 16S rRNA + S-adenosyl-L-methionine = N(4)-methylcytidine(1402) in 16S rRNA + S-adenosyl-L-homocysteine + H(+). Functionally, specifically methylates the N4 position of cytidine in position 1402 (C1402) of 16S rRNA. This chain is Ribosomal RNA small subunit methyltransferase H, found in Shewanella denitrificans (strain OS217 / ATCC BAA-1090 / DSM 15013).